The following is a 244-amino-acid chain: Claudin-12 (244 aa).

The Cytoplasmic portion of the chain corresponds to 1-10; sequence MGCRDVHAAT. The chain crosses the membrane as a helical span at residues 11-31; that stretch reads VLSFLCGIASVAGLFAGTLLP. The Extracellular portion of the chain corresponds to 32–87; it reads NWRKLRLITFNRNEKNLTIYTGLWVKCARYDGSSDCLMYDRTWYLSVDQLDLRVLQ. A helical membrane pass occupies residues 88–108; that stretch reads FALPLSIVIAMGALLLCLIGM. Residues 109–135 are Cytoplasmic-facing; it reads CNTAFNSSVPNIKLAKCLVNSAGCHLV. The helical transmembrane segment at 136 to 156 threads the bilayer; the sequence is AGLLFFLAGTVSLSPSIWAIF. The Extracellular portion of the chain corresponds to 157 to 174; it reads YNSHLNRKFEPVFTFDYA. A helical membrane pass occupies residues 175–195; the sequence is VFVTIASSGGLFMTALLLFVW. The Cytoplasmic segment spans residues 196 to 244; it reads YCACKSLSSPFWQPLYSHAPGMHTYSQPYSSRSRLSAIEIDIPVVSHST. S228 and S231 each carry phosphoserine.

It belongs to the claudin family. As to quaternary structure, interacts with OCLN.

Its subcellular location is the cell junction. It localises to the tight junction. It is found in the cell membrane. Plays a major role in tight junction-specific obliteration of the intercellular space, through calcium-independent cell-adhesion activity. This chain is Claudin-12 (Cldn12), found in Mus musculus (Mouse).